Consider the following 877-residue polypeptide: Ewing's tumor-associated antigen 1 homolog (877 aa).

Residues 1–82 (MQLKDGGTGM…GRSPRGKETP (82 aa)) are disordered. Over residues 56–65 (AGTRSARRAQ) the composition is skewed to basic residues. A Glycyl lysine isopeptide (Lys-Gly) (interchain with G-Cter in SUMO2) cross-link involves residue Lys87. Positions 107-113 (IFWDQNS) match the ATR-activation domain (AAD) motif. Coiled coils occupy residues 185–213 (KTKNREKELMKLAQQFDKNMEELDVIQEQ) and 306–335 (AFLNNSKTSLRKKNALLQEEIITTETLLTE). Glycyl lysine isopeptide (Lys-Gly) (interchain with G-Cter in SUMO2) cross-links involve residues Lys416 and Lys444. The disordered stretch occupies residues 450 to 479 (PSKTRNGELRNAGEHRFSSHPGDESRKVPF). Over residues 454 to 476 (RNGELRNAGEHRFSSHPGDESRK) the composition is skewed to basic and acidic residues. Position 467 is a phosphoserine (Ser467). Lys510 is covalently cross-linked (Glycyl lysine isopeptide (Lys-Gly) (interchain with G-Cter in SUMO2)). Positions 607-622 (GEVDDDLFCQACDDIE) match the RBM1 motif motif. Disordered stretches follow at residues 626-664 (QQENKGSEESESVSYTSTRGSRSSSTASKQASQSAPSKH) and 818-877 (ANQQ…ISLP). Residues 637–662 (SVSYTSTRGSRSSSTASKQASQSAPS) are compositionally biased toward low complexity. Residues 818 to 833 (ANQQQSSINYSESLKP) show a composition bias toward polar residues. Basic and acidic residues predominate over residues 840 to 859 (ERNRKYSPEEIQRKRQEALV). An RBM2 motif motif is present at residues 843–865 (RKYSPEEIQRKRQEALVRRKAKA). A compositionally biased stretch (polar residues) spans 868 to 877 (TVQSAPISLP).

In terms of assembly, interacts (via RBM1 motif) with RPA1. Interacts (via RBM2 motif) with RPA2. Interacts (via the ATR-activation domain motif) with ATR. In terms of processing, phosphorylated by ATR.

The protein resides in the nucleus. In terms of biological role, replication stress response protein that accumulates at DNA damage sites and promotes replication fork progression and integrity. Recruited to stalled replication forks via interaction with the RPA complex and directly stimulates ATR kinase activity independently of TOPBP1. Probably only regulates a subset of ATR targets. The protein is Ewing's tumor-associated antigen 1 homolog of Mus musculus (Mouse).